Reading from the N-terminus, the 197-residue chain is NADH-quinone oxidoreductase subunit I 2 (197 aa).

4Fe-4S ferredoxin-type domains are found at residues 42-71 and 91-120; these read GVIG…IDSH and DRFA…WSPE. [4Fe-4S] cluster-binding residues include Cys51, Cys54, Cys57, Cys61, Cys100, Cys103, Cys106, and Cys110. Positions 147 to 197 are disordered; that stretch reads APPALDPGAEEPKELAAARKAADKLAAQQQPDQPGPDHPGQPDESGQEGRT. Positions 156–169 are enriched in basic and acidic residues; the sequence is EEPKELAAARKAAD.

The protein belongs to the complex I 23 kDa subunit family. NDH-1 is composed of 14 different subunits. Subunits NuoA, H, J, K, L, M, N constitute the membrane sector of the complex. The cofactor is [4Fe-4S] cluster.

Its subcellular location is the cell membrane. The catalysed reaction is a quinone + NADH + 5 H(+)(in) = a quinol + NAD(+) + 4 H(+)(out). Functionally, NDH-1 shuttles electrons from NADH, via FMN and iron-sulfur (Fe-S) centers, to quinones in the respiratory chain. The immediate electron acceptor for the enzyme in this species is believed to be ubiquinone. Couples the redox reaction to proton translocation (for every two electrons transferred, four hydrogen ions are translocated across the cytoplasmic membrane), and thus conserves the redox energy in a proton gradient. This is NADH-quinone oxidoreductase subunit I 2 from Streptomyces coelicolor (strain ATCC BAA-471 / A3(2) / M145).